The following is a 100-amino-acid chain: Small cysteine and glycine repeat-containing protein 3 (100 aa).

The tract at residues 4 to 82 is 13 X 2 AA repeats of CG; the sequence is CGCGSCGGCG…RRTCRSCGCG (79 aa).

It belongs to the KRTAP type 28 family.

In terms of biological role, in the hair cortex, hair keratin intermediate filaments are embedded in an interfilamentous matrix, consisting of hair keratin-associated proteins (KRTAP), which are essential for the formation of a rigid and resistant hair shaft through their extensive disulfide bond cross-linking with abundant cysteine residues of hair keratins. The matrix proteins include the high-sulfur and high-glycine-tyrosine keratins. The polypeptide is Small cysteine and glycine repeat-containing protein 3 (Homo sapiens (Human)).